Here is a 392-residue protein sequence, read N- to C-terminus: uncharacterized protein (392 aa).

This sequence belongs to the ROK (NagC/XylR) family.

This is an uncharacterized protein from Sinorhizobium fredii (strain NBRC 101917 / NGR234).